Consider the following 145-residue polypeptide: Copper transporter 4 (145 aa).

2 helical membrane passes run 53–73 (GMYA…EWLA) and 106–126 (YLVI…AIFG).

This sequence belongs to the copper transporter (Ctr) (TC 1.A.56) family. SLC31A subfamily. Highly expressed in roots and at lower levels in leaves, stems and flowers.

Its subcellular location is the membrane. In terms of biological role, involved in the transport of copper. This chain is Copper transporter 4 (COPT4), found in Arabidopsis thaliana (Mouse-ear cress).